A 190-amino-acid polypeptide reads, in one-letter code: Threonylcarbamoyl-AMP synthase (190 aa).

One can recognise a YrdC-like domain in the interval 7–190 (LSSLIKCIRK…IVNGKLIRYV (184 aa)).

The protein belongs to the SUA5 family. TsaC subfamily.

It is found in the cytoplasm. The catalysed reaction is L-threonine + hydrogencarbonate + ATP = L-threonylcarbamoyladenylate + diphosphate + H2O. In terms of biological role, required for the formation of a threonylcarbamoyl group on adenosine at position 37 (t(6)A37) in tRNAs that read codons beginning with adenine. Catalyzes the conversion of L-threonine, HCO(3)(-)/CO(2) and ATP to give threonylcarbamoyl-AMP (TC-AMP) as the acyladenylate intermediate, with the release of diphosphate. The polypeptide is Threonylcarbamoyl-AMP synthase (Buchnera aphidicola subsp. Schizaphis graminum (strain Sg)).